Here is a 71-residue protein sequence, read N- to C-terminus: Small ribosomal subunit protein bS21 (71 aa).

Belongs to the bacterial ribosomal protein bS21 family.

This is Small ribosomal subunit protein bS21 from Buchnera aphidicola subsp. Cinara cedri (strain Cc).